We begin with the raw amino-acid sequence, 158 residues long: Ribonuclease HI (158 aa).

In terms of domain architecture, RNase H type-1 spans 3–144; sequence ELKLIHIFTD…CDQLARAAAE (142 aa). Mg(2+)-binding residues include aspartate 12, glutamate 50, aspartate 72, and aspartate 136.

The protein belongs to the RNase H family. Monomer. It depends on Mg(2+) as a cofactor.

The protein resides in the cytoplasm. The catalysed reaction is Endonucleolytic cleavage to 5'-phosphomonoester.. Functionally, endonuclease that specifically degrades the RNA of RNA-DNA hybrids. This Shewanella oneidensis (strain ATCC 700550 / JCM 31522 / CIP 106686 / LMG 19005 / NCIMB 14063 / MR-1) protein is Ribonuclease HI.